The following is a 248-amino-acid chain: PACRG-like protein (248 aa).

An N-acetylmethionine modification is found at Met1. Positions 1-72 (MQRSECSGGV…NPKTINPFGE (72 aa)) are disordered. Polar residues-rich tracts occupy residues 14 to 29 (NRATGSNDQRTSSSTQ) and 36 to 45 (VQRSKSSSLT). A Phosphoserine modification is found at Ser47.

The chain is PACRG-like protein (Pacrgl) from Mus musculus (Mouse).